Consider the following 350-residue polypeptide: Uroporphyrinogen decarboxylase (350 aa).

Residues 23-27 (RQAGR), aspartate 73, tyrosine 150, threonine 205, and histidine 322 each bind substrate.

Belongs to the uroporphyrinogen decarboxylase family. Homodimer.

It localises to the cytoplasm. The enzyme catalyses uroporphyrinogen III + 4 H(+) = coproporphyrinogen III + 4 CO2. Its pathway is porphyrin-containing compound metabolism; protoporphyrin-IX biosynthesis; coproporphyrinogen-III from 5-aminolevulinate: step 4/4. Catalyzes the decarboxylation of four acetate groups of uroporphyrinogen-III to yield coproporphyrinogen-III. The chain is Uroporphyrinogen decarboxylase from Methylococcus capsulatus (strain ATCC 33009 / NCIMB 11132 / Bath).